Here is a 64-residue protein sequence, read N- to C-terminus: Large ribosomal subunit protein uL30 (64 aa).

It belongs to the universal ribosomal protein uL30 family. Part of the 50S ribosomal subunit.

The polypeptide is Large ribosomal subunit protein uL30 (Methylorubrum extorquens (strain CM4 / NCIMB 13688) (Methylobacterium extorquens)).